A 94-amino-acid chain; its full sequence is Co-chaperonin GroES (94 aa).

It belongs to the GroES chaperonin family. In terms of assembly, heptamer of 7 subunits arranged in a ring. Interacts with the chaperonin GroEL.

The protein resides in the cytoplasm. Its function is as follows. Together with the chaperonin GroEL, plays an essential role in assisting protein folding. The GroEL-GroES system forms a nano-cage that allows encapsulation of the non-native substrate proteins and provides a physical environment optimized to promote and accelerate protein folding. GroES binds to the apical surface of the GroEL ring, thereby capping the opening of the GroEL channel. The sequence is that of Co-chaperonin GroES from Ruminiclostridium cellulolyticum (strain ATCC 35319 / DSM 5812 / JCM 6584 / H10) (Clostridium cellulolyticum).